A 316-amino-acid chain; its full sequence is Olfactory receptor 10A7 (316 aa).

Residues M1–V25 are Extracellular-facing. N5 is a glycosylation site (N-linked (GlcNAc...) asparagine). The chain crosses the membrane as a helical span at residues S26–V46. Topologically, residues T47–A54 are cytoplasmic. A helical transmembrane segment spans residues L55–L75. Topologically, residues V76–T99 are extracellular. The helical transmembrane segment at Q100–Y120 threads the bilayer. Residues D121 to S139 are Cytoplasmic-facing. A helical membrane pass occupies residues L140–T160. Residues A161–M197 lie on the Extracellular side of the membrane. Residues Q198–S217 form a helical membrane-spanning segment. Over Y218–A237 the chain is Cytoplasmic. Residues F238–T258 traverse the membrane as a helical segment. Topologically, residues Y259–K271 are extracellular. The helical transmembrane segment at K272–L292 threads the bilayer. The Cytoplasmic portion of the chain corresponds to R293 to F316.

The protein belongs to the G-protein coupled receptor 1 family.

Its subcellular location is the cell membrane. Its function is as follows. Odorant receptor. The polypeptide is Olfactory receptor 10A7 (OR10A7) (Homo sapiens (Human)).